Here is a 459-residue protein sequence, read N- to C-terminus: Argininosuccinate lyase (459 aa).

This sequence belongs to the lyase 1 family. Argininosuccinate lyase subfamily.

It localises to the cytoplasm. The catalysed reaction is 2-(N(omega)-L-arginino)succinate = fumarate + L-arginine. It participates in amino-acid biosynthesis; L-arginine biosynthesis; L-arginine from L-ornithine and carbamoyl phosphate: step 3/3. The protein is Argininosuccinate lyase of Geobacillus kaustophilus (strain HTA426).